The primary structure comprises 427 residues: ATP-dependent RNA helicase DDX39A (427 aa).

The span at 1-19 shows a compositional bias: acidic residues; it reads MAEQDVENDLLDYDEEEEP. Residues 1-34 form a disordered region; it reads MAEQDVENDLLDYDEEEEPQAPQESTPAPPKKDI. A2 is subject to N-acetylalanine. K31 is covalently cross-linked (Glycyl lysine isopeptide (Lys-Gly) (interchain with G-Cter in SUMO2)). Residue K35 is modified to N6-acetyllysine; alternate. K35 participates in a covalent cross-link: Glycyl lysine isopeptide (Lys-Gly) (interchain with G-Cter in SUMO2); alternate. S37 carries the phosphoserine modification. The short motif at 44-72 is the Q motif element; sequence SGFRDFLLKPELLRAIVDCGFEHPSEVQH. Residues 75–248 form the Helicase ATP-binding domain; the sequence is IPQAILGMDV…RKFMQDPMEV (174 aa). 88-95 serves as a coordination point for ATP; the sequence is AKSGMGKT. Residues K154 and K162 each participate in a glycyl lysine isopeptide (Lys-Gly) (interchain with G-Cter in SUMO2) cross-link. The residue at position 171 (T171) is a Phosphothreonine. The short motif at 195–198 is the DECD box element; it reads DECD. Residues K240 and K255 each participate in a glycyl lysine isopeptide (Lys-Gly) (interchain with G-Cter in SUMO2) cross-link. Residues 260 to 421 form the Helicase C-terminal domain; the sequence is GLQQYYVKLK…ELPEEIDIST (162 aa). S426 is subject to Phosphoserine.

Belongs to the DEAD box helicase family. DECD subfamily. In terms of assembly, binds ALYREF/THOC4 and DDX39B/BAT1. Interacts with the apo-AREX complex component SARNP. Interacts with MX1. Interacts with MCM3AP isoform GANP. Interacts with ECD. Interacts with PHAX; this interaction stimulates PHAX RNA binding activity. (Microbial infection) Interacts with human cytomegalovirus/HHV-5 protein UL69. SUMOylated by RANBP2; SUMOylation modification affects its ability to bind RNA. As to expression, detected in testis, and at lower levels in brain, kidney, lung, thymus, spleen and salivary gland.

The protein resides in the nucleus. Its subcellular location is the cytoplasm. The catalysed reaction is ATP + H2O = ADP + phosphate + H(+). Functionally, helicase that plays an essential role in mRNA export and is involved in multiple steps in RNA metabolism including alternative splicing. Regulates nuclear mRNA export to the cytoplasm through association with ECD. Also involved in spliceosomal uridine-rich small nuclear RNA (U snRNA) export by stimulating the RNA binding of adapter PHAX. Plays a role in the negative regulation of type I IFN production by increasing the nuclear retention of antiviral transcripts and thus reducing their protein expression. Independently of the interferon pathway, plays an antiviral role against alphaviruses by binding to a 5' conserved sequence element in the viral genomic RNA. The polypeptide is ATP-dependent RNA helicase DDX39A (DDX39A) (Homo sapiens (Human)).